Consider the following 1107-residue polypeptide: Unconventional myosin-Ie (1107 aa).

Residues 19 to 692 (SGVDDMVLLS…SLFLLEEMRE (674 aa)) enclose the Myosin motor domain. 112–119 (GESGAGKT) contributes to the ATP binding site. The interval 581–591 (PHYIRCIKPNE) is actin-binding. Residues 695–724 (YDGYARVIQKTWRKFVARKKYVQMREEASD) form the IQ domain. The TH1 domain maps to 730-922 (KERRRNSINR…NKVLQVSIGP (193 aa)). A disordered region spans residues 919–1052 (SIGPGLPKNS…KPQPKPKPQV (134 aa)). Composition is skewed to polar residues over residues 979 to 989 (NQRSNQKSLYT) and 998 to 1012 (RQQS…QTPE). A Phosphoserine modification is found at serine 1001. Residues 1034 to 1051 (RPPPAGGRPKPQPKPKPQ) show a composition bias toward pro residues. The SH3 domain maps to 1050 to 1107 (PQVPQCKALYAYDAQDTDELSFNANDIIDIIKEDPSGWWTGRLRGKQGLFPNNYVTKI).

It belongs to the TRAFAC class myosin-kinesin ATPase superfamily. Myosin family. Interacts with CALM and F-actin. Interacts (via SH3 domain) with SYNJ1, DNM1 and DNM2. Interacts with ARL14EP. Interacts with CARMIL1. Detected in kidney glomeruli (at protein level). Detected in utricle.

The protein localises to the cytoplasm. It is found in the cell junction. Its subcellular location is the cytoplasmic vesicle. The protein resides in the clathrin-coated vesicle. It localises to the cytoskeleton. Functionally, myosins are actin-based motor molecules with ATPase activity. Unconventional myosins serve in intracellular movements. Their highly divergent tails bind to membranous compartments, which are then moved relative to actin filaments. Binds to membranes containing anionic phospholipids via its tail domain. Involved in clathrin-mediated endocytosis and intracellular movement of clathrin-coated vesicles. Required for normal morphology of the glomerular basement membrane, normal development of foot processes by kidney podocytes and normal kidney function. In dendritic cells, may control the movement of class II-containing cytoplasmic vesicles along the actin cytoskeleton by connecting them with the actin network via ARL14EP and ARL14. This chain is Unconventional myosin-Ie (Myo1e), found in Mus musculus (Mouse).